The following is a 567-amino-acid chain: Proline--tRNA ligase (567 aa).

This sequence belongs to the class-II aminoacyl-tRNA synthetase family. ProS type 1 subfamily. Homodimer.

Its subcellular location is the cytoplasm. It carries out the reaction tRNA(Pro) + L-proline + ATP = L-prolyl-tRNA(Pro) + AMP + diphosphate. Catalyzes the attachment of proline to tRNA(Pro) in a two-step reaction: proline is first activated by ATP to form Pro-AMP and then transferred to the acceptor end of tRNA(Pro). As ProRS can inadvertently accommodate and process non-cognate amino acids such as alanine and cysteine, to avoid such errors it has two additional distinct editing activities against alanine. One activity is designated as 'pretransfer' editing and involves the tRNA(Pro)-independent hydrolysis of activated Ala-AMP. The other activity is designated 'posttransfer' editing and involves deacylation of mischarged Ala-tRNA(Pro). The misacylated Cys-tRNA(Pro) is not edited by ProRS. This Idiomarina loihiensis (strain ATCC BAA-735 / DSM 15497 / L2-TR) protein is Proline--tRNA ligase.